A 1235-amino-acid polypeptide reads, in one-letter code: JNK-interacting protein 3 (1235 aa).

The segment at 1–22 (MMDNDDALLNNGGPQSGAETVY) is disordered. Positions 25-113 (EDNNMVMSEK…VTQYEREKSA (89 aa)) constitute an RH1 domain. Residues 84-184 (RINQEQDVEL…NKLHERYTEL (101 aa)) are a coiled coil. The segment at 278 to 325 (GAATDSLQQQHQATSPQSPPDTSPVVPNVPPANVGRSTTKKEQRSDNN) is disordered. Residues 282–293 (DSLQQQHQATSP) show a composition bias toward polar residues. Pro residues predominate over residues 294-307 (QSPPDTSPVVPNVP). Residues 366–493 (GKEVENLIME…AVRLTEILRA (128 aa)) are a coiled coil. Residues 456–526 (RKRFTRVEMA…TPSNRPTERI (71 aa)) form the RH2 domain. 3 disordered regions span residues 520 to 572 (NRPT…MHPA), 813 to 852 (KPKS…PVNA), and 869 to 897 (PGAP…STGS). The segment covering 529–543 (GLGGGPMFRNTGGGS) has biased composition (gly residues). 2 stretches are compositionally biased toward low complexity: residues 544-555 (PAHSHGSPSRGS) and 821-830 (NSNSKPQQQQ). The span at 874–897 (RLSSGNSGSDGNQANNNNSSSTGS) shows a compositional bias: polar residues.

The protein belongs to the JIP scaffold family. Forms homo- and heterooligomeric complexes. Binds the TPR motif-containing C-terminal of kinesin light chain, Klc. Pre-assembled syd scaffolding complexes are then transported as a cargo of kinesin, to the required subcellular location.

It localises to the cytoplasm. The JNK-interacting protein (JIP) group of scaffold proteins selectively mediates JNK-signaling by aggregating specific components of the MAPK cascade to form a functional JNK signaling module. May function as a regulator of vesicle transport, through interactions with the JNK-signaling components and motor proteins. Syd is required for efficient kinesin-I mediated axonal transport. This is JNK-interacting protein 3 from Drosophila pseudoobscura pseudoobscura (Fruit fly).